The chain runs to 764 residues: 5-methyltetrahydropteroyltriglutamate--homocysteine methyltransferase (764 aa).

Residues 16 to 19 (RELK) and Lys-112 each bind 5-methyltetrahydropteroyltri-L-glutamate. L-homocysteine is bound by residues 431-433 (IGS) and Glu-484. L-methionine-binding positions include 431 to 433 (IGS) and Glu-484. Residues 515–516 (RC) and Trp-561 contribute to the 5-methyltetrahydropteroyltri-L-glutamate site. L-homocysteine is bound at residue Asp-599. An L-methionine-binding site is contributed by Asp-599. Glu-605 lines the 5-methyltetrahydropteroyltri-L-glutamate pocket. 3 residues coordinate Zn(2+): His-641, Cys-643, and Glu-665. His-694 functions as the Proton donor in the catalytic mechanism. Zn(2+) is bound at residue Cys-726.

The protein belongs to the vitamin-B12 independent methionine synthase family. Zn(2+) is required as a cofactor.

It catalyses the reaction 5-methyltetrahydropteroyltri-L-glutamate + L-homocysteine = tetrahydropteroyltri-L-glutamate + L-methionine. It participates in amino-acid biosynthesis; L-methionine biosynthesis via de novo pathway; L-methionine from L-homocysteine (MetE route): step 1/1. Its function is as follows. Catalyzes the transfer of a methyl group from 5-methyltetrahydrofolate to homocysteine resulting in methionine formation. This is 5-methyltetrahydropteroyltriglutamate--homocysteine methyltransferase from Paraburkholderia xenovorans (strain LB400).